The following is a 325-amino-acid chain: Ribosomal RNA small subunit methyltransferase H (325 aa).

S-adenosyl-L-methionine is bound by residues 32 to 34, Asp52, Phe79, Asp100, and Gln107; that span reads GGH.

It belongs to the methyltransferase superfamily. RsmH family.

It is found in the cytoplasm. The catalysed reaction is cytidine(1402) in 16S rRNA + S-adenosyl-L-methionine = N(4)-methylcytidine(1402) in 16S rRNA + S-adenosyl-L-homocysteine + H(+). Functionally, specifically methylates the N4 position of cytidine in position 1402 (C1402) of 16S rRNA. The polypeptide is Ribosomal RNA small subunit methyltransferase H (Oceanobacillus iheyensis (strain DSM 14371 / CIP 107618 / JCM 11309 / KCTC 3954 / HTE831)).